Reading from the N-terminus, the 827-residue chain is Valine--tRNA ligase (827 aa).

Positions 41–51 match the 'HIGH' region motif; sequence PNVTGQLHLGH. Positions 511–515 match the 'KMSKS' region motif; it reads KMTKS. Lysine 514 is an ATP binding site. Positions 765–827 form a coiled coil; it reads ENLSKEKAQK…KELLDEKIIE (63 aa).

Belongs to the class-I aminoacyl-tRNA synthetase family. ValS type 1 subfamily. Monomer.

Its subcellular location is the cytoplasm. It catalyses the reaction tRNA(Val) + L-valine + ATP = L-valyl-tRNA(Val) + AMP + diphosphate. Functionally, catalyzes the attachment of valine to tRNA(Val). As ValRS can inadvertently accommodate and process structurally similar amino acids such as threonine, to avoid such errors, it has a 'posttransfer' editing activity that hydrolyzes mischarged Thr-tRNA(Val) in a tRNA-dependent manner. The chain is Valine--tRNA ligase from Mycoplasmopsis pulmonis (strain UAB CTIP) (Mycoplasma pulmonis).